A 511-amino-acid polypeptide reads, in one-letter code: Type 2 DNA topoisomerase 6 subunit B-like (511 aa).

The tract at residues 398–485 is disordered; it reads DSAQGTEDAP…RALAPGRASL (88 aa). Positions 408 to 422 are enriched in polar residues; that stretch reads DNSSLELLADTSGQA. The segment covering 440–451 has biased composition (low complexity); it reads LRSARAPSPSEA. Residues 466-475 show a composition bias toward basic and acidic residues; sequence RGREHREAHG.

The protein belongs to the TOP6B-like family. As to quaternary structure, heterotetramer of SPO11 and 2 TOP6BL chains. Interacts with SPO11. As to expression, detected in lung, spleen,colon and in skeletal muscle. Expressed in the ovaries, Fallopian tubes and uterus.

The protein resides in the chromosome. Component of a topoisomerase 6 complex specifically required for meiotic recombination. Together with SPO11, mediates DNA cleavage that forms the double-strand breaks (DSB) that initiate meiotic recombination. The complex promotes relaxation of negative and positive supercoiled DNA and DNA decatenation through cleavage and ligation cycles. The protein is Type 2 DNA topoisomerase 6 subunit B-like of Homo sapiens (Human).